The chain runs to 102 residues: NADH-quinone oxidoreductase subunit K (102 aa).

Helical transmembrane passes span 6–26 (LGQG…GVLV), 30–50 (LLFM…AFIV), and 64–84 (FILV…LILL).

This sequence belongs to the complex I subunit 4L family. As to quaternary structure, NDH-1 is composed of 14 different subunits. Subunits NuoA, H, J, K, L, M, N constitute the membrane sector of the complex.

It is found in the cell inner membrane. It catalyses the reaction a quinone + NADH + 5 H(+)(in) = a quinol + NAD(+) + 4 H(+)(out). Its function is as follows. NDH-1 shuttles electrons from NADH, via FMN and iron-sulfur (Fe-S) centers, to quinones in the respiratory chain. The immediate electron acceptor for the enzyme in this species is believed to be ubiquinone. Couples the redox reaction to proton translocation (for every two electrons transferred, four hydrogen ions are translocated across the cytoplasmic membrane), and thus conserves the redox energy in a proton gradient. This is NADH-quinone oxidoreductase subunit K from Acidiphilium cryptum (strain JF-5).